The sequence spans 580 residues: Tricyclene synthase TPS4, chloroplastic (580 aa).

Residues 1–41 (MLLNSSFISLPSFFKSQELGRTNLLIHRNGSPLLCYATNTN) constitute a chloroplast transit peptide. The (2E)-geranyl diphosphate site is built by arginine 296, aspartate 334, aspartate 338, arginine 475, and asparagine 478. The Mg(2+) site is built by aspartate 334 and aspartate 338. Residues 334 to 338 (DDIYD) carry the DDXXD motif motif. Mg(2+) is bound by residues asparagine 478, threonine 482, and glutamate 486.

The protein belongs to the terpene synthase family. Tpsb subfamily. Mg(2+) is required as a cofactor. The cofactor is Mn(2+). Expressed in leaves.

Its subcellular location is the plastid. It is found in the chloroplast stroma. It catalyses the reaction (2E)-geranyl diphosphate = tricyclene + diphosphate. The catalysed reaction is (2E)-geranyl diphosphate = (E)-beta-ocimene + diphosphate. It functions in the pathway secondary metabolite biosynthesis; terpenoid biosynthesis. Promotes the emission of terpenes volatile organic compounds (VOC) in response to damage mediated by arthropod herbivores (e.g. Spodoptera exigua), probably to attract natural enemies of the herbivores. In Medicago truncatula (Barrel medic), this protein is Tricyclene synthase TPS4, chloroplastic (TPS4).